A 243-amino-acid chain; its full sequence is Uridylate kinase (243 aa).

ATP is bound at residue 12 to 15 (KLSG). The tract at residues 20-25 (GPGGSG) is involved in allosteric activation by GTP. G56 provides a ligand contact to UMP. Residues G57 and R61 each coordinate ATP. UMP contacts are provided by residues D76 and 137–144 (TGSPYFST). Residues N165, Y171, and D174 each contribute to the ATP site.

This sequence belongs to the UMP kinase family. Homohexamer.

The protein localises to the cytoplasm. The catalysed reaction is UMP + ATP = UDP + ADP. Its pathway is pyrimidine metabolism; CTP biosynthesis via de novo pathway; UDP from UMP (UMPK route): step 1/1. Its activity is regulated as follows. Allosterically activated by GTP. Inhibited by UTP. Functionally, catalyzes the reversible phosphorylation of UMP to UDP. The polypeptide is Uridylate kinase (Oenococcus oeni (strain ATCC BAA-331 / PSU-1)).